The sequence spans 164 residues: Crossover junction endodeoxyribonuclease RuvC (164 aa).

Catalysis depends on residues Asp-7, Glu-67, and Asp-140. Mg(2+) is bound by residues Asp-7, Glu-67, and Asp-140.

It belongs to the RuvC family. Homodimer which binds Holliday junction (HJ) DNA. The HJ becomes 2-fold symmetrical on binding to RuvC with unstacked arms; it has a different conformation from HJ DNA in complex with RuvA. In the full resolvosome a probable DNA-RuvA(4)-RuvB(12)-RuvC(2) complex forms which resolves the HJ. Mg(2+) is required as a cofactor.

Its subcellular location is the cytoplasm. It catalyses the reaction Endonucleolytic cleavage at a junction such as a reciprocal single-stranded crossover between two homologous DNA duplexes (Holliday junction).. Its function is as follows. The RuvA-RuvB-RuvC complex processes Holliday junction (HJ) DNA during genetic recombination and DNA repair. Endonuclease that resolves HJ intermediates. Cleaves cruciform DNA by making single-stranded nicks across the HJ at symmetrical positions within the homologous arms, yielding a 5'-phosphate and a 3'-hydroxyl group; requires a central core of homology in the junction. The consensus cleavage sequence is 5'-(A/T)TT(C/G)-3'. Cleavage occurs on the 3'-side of the TT dinucleotide at the point of strand exchange. HJ branch migration catalyzed by RuvA-RuvB allows RuvC to scan DNA until it finds its consensus sequence, where it cleaves and resolves the cruciform DNA. The protein is Crossover junction endodeoxyribonuclease RuvC of Finegoldia magna (strain ATCC 29328 / DSM 20472 / WAL 2508) (Peptostreptococcus magnus).